The primary structure comprises 578 residues: A-type ATP synthase subunit A (578 aa).

An ATP-binding site is contributed by 228–235 (GPFGSGKT).

This sequence belongs to the ATPase alpha/beta chains family. In terms of assembly, has multiple subunits with at least A(3), B(3), C, D, E, F, H, I and proteolipid K(x).

It localises to the cell membrane. It catalyses the reaction ATP + H2O + 4 H(+)(in) = ADP + phosphate + 5 H(+)(out). Functionally, component of the A-type ATP synthase that produces ATP from ADP in the presence of a proton gradient across the membrane. The A chain is the catalytic subunit. This Methanosarcina acetivorans (strain ATCC 35395 / DSM 2834 / JCM 12185 / C2A) protein is A-type ATP synthase subunit A.